Reading from the N-terminus, the 205-residue chain is dITP/XTP pyrophosphatase (205 aa).

11-16 (TKNMGK) is a substrate binding site. Mg(2+) is bound by residues Glu-44 and Asp-73. Asp-73 functions as the Proton acceptor in the catalytic mechanism. Substrate-binding positions include Ser-74, 158-161 (FGYD), Lys-181, and 186-187 (HR).

This sequence belongs to the HAM1 NTPase family. Homodimer. Mg(2+) is required as a cofactor.

The enzyme catalyses XTP + H2O = XMP + diphosphate + H(+). The catalysed reaction is dITP + H2O = dIMP + diphosphate + H(+). It carries out the reaction ITP + H2O = IMP + diphosphate + H(+). Pyrophosphatase that catalyzes the hydrolysis of nucleoside triphosphates to their monophosphate derivatives, with a high preference for the non-canonical purine nucleotides XTP (xanthosine triphosphate), dITP (deoxyinosine triphosphate) and ITP. Seems to function as a house-cleaning enzyme that removes non-canonical purine nucleotides from the nucleotide pool, thus preventing their incorporation into DNA/RNA and avoiding chromosomal lesions. The polypeptide is dITP/XTP pyrophosphatase (Bacillus thuringiensis subsp. konkukian (strain 97-27)).